Consider the following 293-residue polypeptide: Elongation factor Ts (293 aa).

Residues 79–82 (TDFV) form an involved in Mg(2+) ion dislocation from EF-Tu region.

It belongs to the EF-Ts family.

Its subcellular location is the cytoplasm. Functionally, associates with the EF-Tu.GDP complex and induces the exchange of GDP to GTP. It remains bound to the aminoacyl-tRNA.EF-Tu.GTP complex up to the GTP hydrolysis stage on the ribosome. The chain is Elongation factor Ts from Exiguobacterium sibiricum (strain DSM 17290 / CCUG 55495 / CIP 109462 / JCM 13490 / 255-15).